The following is a 210-amino-acid chain: Thymidylate kinase (210 aa).

10-17 (GPEGAGKS) is an ATP binding site.

It belongs to the thymidylate kinase family.

It catalyses the reaction dTMP + ATP = dTDP + ADP. Its function is as follows. Phosphorylation of dTMP to form dTDP in both de novo and salvage pathways of dTTP synthesis. The sequence is that of Thymidylate kinase from Pseudomonas putida (strain GB-1).